The chain runs to 503 residues: Angiopoietin-4 (503 aa).

Residues 1-24 form the signal peptide; sequence MLSQLAMLQGSLLLVVATMSVAQQ. A coiled-coil region spans residues 84–238; that stretch reads TQQVKQLEQA…RQSAALTNIE (155 aa). Residues asparagine 96, asparagine 126, asparagine 140, asparagine 158, asparagine 247, asparagine 274, asparagine 311, asparagine 337, and asparagine 427 are each glycosylated (N-linked (GlcNAc...) asparagine). The 221-residue stretch at 282–502 folds into the Fibrinogen C-terminal domain; sequence MAGEQVFQDC…ASRMMIRPLD (221 aa). The cysteines at positions 291 and 320 are disulfide-linked. A disulfide bridge connects residues cysteine 444 and cysteine 457.

As to quaternary structure, homodimer; disulfide-linked. Interacts with TEK/TIE2. Highly expressed in the lung with much lower levels found in other tissues.

It is found in the secreted. Its function is as follows. Binds to TEK/TIE2, modulating ANGPT1 signaling. Can induce tyrosine phosphorylation of TEK/TIE2. Promotes endothelial cell survival, migration and angiogenesis. In Homo sapiens (Human), this protein is Angiopoietin-4 (ANGPT4).